A 139-amino-acid chain; its full sequence is Large ribosomal subunit protein uL22c (139 aa).

It belongs to the universal ribosomal protein uL22 family. As to quaternary structure, part of the 50S ribosomal subunit.

The protein localises to the plastid. It localises to the chloroplast. In terms of biological role, this protein binds specifically to 23S rRNA. Functionally, the globular domain of the protein is located near the polypeptide exit tunnel on the outside of the subunit, while an extended beta-hairpin is found that lines the wall of the exit tunnel in the center of the 70S ribosome. The protein is Large ribosomal subunit protein uL22c (rpl22) of Cycas taitungensis (Prince sago).